The chain runs to 974 residues: GISVPGPMGPSGPRGLPGPPGSPGPQGFQGPPGEPGEPGASGPMGPRGPPGPPGKNGDDGEAGKPGRPGERRGLPGTAGLPGMKGHRGFSGLDGAKGDAGPAGPKGEPGSPGENGAPGQMGPRGLPGERGRPGASGPAGARGNDGATGAAGPPGPTGPAGPPGFPGAVGAKGEAGPQGARGSEGPQGVRGEPGPPGPAGAAGPAGNPGADGQPGAKGANGAPGIAGAPGFPGRGPSGPQGPSGPPGPKGNSGEPGAPGSKGDTGAKGEPGPTGIQGPPGPAGEEGKRGARGEPGPTGLPGPPGERGGPGSRGFPGADGVAGPKERGSPGPAGPKGSPGEAGRPGEAGLPGAKGLTGSPGSPGPDGKTGPPGPAGQDGRPGPPGPPGARGQAGVMGFPGPKGAAGEPGKAGERGVPGPPGAVGPAGKDGEAGAQGPPGPAGPAGERGEQGPAGSPGFQGLPGEQGVPGDLGAPGPSGARGERGFPGERGVQGPPGPAGPRGSNGAPGNDGAKGDAGAPGAPGGLQGMPGERGAAGLPGPKGDRGDAGPKGADGAPGKDGVRGLTGPIGPPGPAGAPGDKGESGPSGPAGPTGARGAPGDRGEPGPPGPAGFAGPPGADGQPGAKGEPGDAGAKGDAGPPGPAGPTGPPGPIGNVGAPGPKGARGSAGPPGATGFPGAAGRVGPPGPSGNAGPPGPPGPVGKEGGKGPRGETGPAGRPGEVGPPGPPGPGEKGSPGADGPAGAPGTPGPQGISGQRGVVGLPGQRGERGFPGLPGPSGEPGKQGPSGSSGERGPPGPVGPPGLAGPPGESGREGSPGAEGSPGRDGSPGPKGPPGAPGAPGAPGPVGPAGKSGDRGETGPAGPAGPAGPAGARGPAGPQGPRGDKGETGEQGDRRGFSGLQGPAGPPGSPGEQGPSGASGPAGPRGPPGSAGSPGKDGLNGLPGPIGPPGPRGRTGDAGPVGPPGPPGPPGPPGPP.

Positions 1–14 are enriched in low complexity; that stretch reads GISVPGPMGPSGPR. The tract at residues 1 to 974 is disordered; that stretch reads GISVPGPMGP…PGPPGPPGPP (974 aa). 4-hydroxyproline is present on residues Pro17, Pro20, Pro23, Pro32, Pro35, Pro38, Pro53, Pro68, Pro75, and Pro81. Low complexity predominate over residues 25-44; it reads PQGFQGPPGEPGEPGASGPM. Positions 56-73 are enriched in basic and acidic residues; sequence NGDDGEAGKPGRPGERRG. The residue at position 84 (Lys84) is a 5-hydroxylysine; alternate. An O-linked (Gal...) hydroxylysine; alternate glycan is attached at Lys84. Residue Ser90 is modified to Phosphoserine. Positions 98–114 are enriched in low complexity; that stretch reads DAGPAGPKGEPGSPGEN. A 4-hydroxyproline mark is found at Pro108, Pro111, Pro117, Pro126, Pro132, Pro153, Pro162, Pro165, Pro192, Pro195, Pro207, Pro213, Pro222, Pro228, Pro231, and Pro245. The segment covering 132–150 has biased composition (low complexity); the sequence is PGASGPAGARGNDGATGAA. Over residues 152–164 the composition is skewed to pro residues; sequence PPGPTGPAGPPGF. Over residues 198–228 the composition is skewed to low complexity; it reads AGAAGPAGNPGADGQPGAKGANGAPGIAGAP. Lys248 carries the 5-hydroxylysine modification. Pro254, Pro257, Pro269, Pro278, Pro293, Pro299, Pro308, and Pro314 each carry 4-hydroxyproline. A compositionally biased stretch (gly residues) spans 303–312; sequence GERGGPGSRG. 5-hydroxylysine is present on Lys323. 4-hydroxyproline occurs at positions 328, 337, 343, 349, 358, 361, 370, 379, 385, 397, 406, 415, 418, 436, 454, 460, 466, 472, 484, 493, 505, 520, 527, and 536. Residues 352–378 show a composition bias toward low complexity; that stretch reads KGLTGSPGSPGPDGKTGPPGPAGQDGR. A compositionally biased stretch (low complexity) spans 387–406; sequence ARGQAGVMGFPGPKGAAGEP. Low complexity predominate over residues 504-517; the sequence is APGNDGAKGDAGAP. Lys548 carries the 5-hydroxylysine modification. Residues Pro554, Pro569, and Pro575 each carry the 4-hydroxyproline modification. The span at 581–595 shows a compositional bias: low complexity; that stretch reads SGPSGPAGPTGARGA. Residue Ser584 is modified to Phosphoserine. Pro596, Pro602, Pro605, Pro614, Pro620, Pro638, Pro647, and Pro656 each carry 4-hydroxyproline. A compositionally biased stretch (low complexity) spans 608–635; the sequence is AGFAGPPGADGQPGAKGEPGDAGAKGDA. Over residues 637 to 649 the composition is skewed to pro residues; it reads PPGPAGPTGPPGP. At Lys659 the chain carries 5-hydroxylysine. A compositionally biased stretch (low complexity) spans 664-680; the sequence is SAGPPGATGFPGAAGRV. Pro668 and Pro674 each carry 4-hydroxyproline. Position 682 is a 3-hydroxyproline (Pro682). Pro683, Pro692, Pro695, Pro716, Pro725, Pro733, Pro742, Pro760, Pro769, Pro772, Pro778, Pro793, Pro799, Pro805, Pro814, and Pro820 each carry 4-hydroxyproline. Over residues 709-718 the composition is skewed to low complexity; that stretch reads ETGPAGRPGE. The segment covering 730–742 has biased composition (low complexity); sequence KGSPGADGPAGAP. The segment covering 792–802 has biased composition (pro residues); sequence PPGPVGPPGLA. Low complexity predominate over residues 804 to 826; that stretch reads PPGESGREGSPGAEGSPGRDGSP. Pro residues predominate over residues 828-844; sequence PKGPPGAPGAPGAPGPV. The residue at position 829 (Lys829) is a 5-hydroxylysine. 4-hydroxyproline occurs at positions 832, 835, and 838. The span at 865–879 shows a compositional bias: low complexity; that stretch reads AGPAGARGPAGPQGP. Positions 880–894 are enriched in basic and acidic residues; that stretch reads RGDKGETGEQGDRRG. Residue Lys883 is modified to 5-hydroxylysine. 4 positions are modified to 4-hydroxyproline: Pro905, Pro908, Pro926, and Pro941. Residues 908-941 are compositionally biased toward low complexity; sequence PGEQGPSGASGPAGPRGPPGSAGSPGKDGLNGLP. Pro946 carries the post-translational modification 3-hydroxyproline. Pro947 is modified (4-hydroxyproline). Residues 959 to 974 show a composition bias toward pro residues; the sequence is VGPPGPPGPPGPPGPP. Pro961 carries the post-translational modification 3-hydroxyproline. Pro962 carries the post-translational modification 4-hydroxyproline. 3-hydroxyproline is present on Pro964. 4-hydroxyproline is present on Pro965. Pro967 is modified (3-hydroxyproline). A 4-hydroxyproline mark is found at Pro968, Pro971, and Pro974.

It belongs to the fibrillar collagen family. As to quaternary structure, trimers of one alpha 2(I) and two alpha 1(I) chains. Contains mostly 4-hydroxyproline. Proline residues at the third position of the tripeptide repeating unit (G-X-Y) are hydroxylated in some or all of the chains. Post-translationally, contains 3-hydroxyproline at a few sites. This modification occurs on the first proline residue in the sequence motif Gly-Pro-Hyp, where Hyp is 4-hydroxyproline. In terms of processing, lysine residues at the third position of the tripeptide repeating unit (G-X-Y) are 5-hydroxylated in some or all of the chains. O-glycosylated on hydroxylated lysine residues. The O-linked glycan consists of a Glc-Gal disaccharide. As to expression, expressed in bones.

Its subcellular location is the secreted. It localises to the extracellular space. It is found in the extracellular matrix. Its function is as follows. Type I collagen is a member of group I collagen (fibrillar forming collagen). This chain is Collagen alpha-1(I) chain, found in Scelidodon sp. (strain SLP-2019) (South American ground sloth).